A 242-amino-acid chain; its full sequence is uncharacterized protein (242 aa).

The 68-residue stretch at 2-69 (YRLAKIISNA…KPRLWIYYKP (68 aa)) folds into the S4 RNA-binding domain. Residue Asp-102 is the Nucleophile of the active site.

The protein belongs to the pseudouridine synthase RsuA family.

The catalysed reaction is a uridine in RNA = a pseudouridine in RNA. This is an uncharacterized protein from Rickettsia typhi (strain ATCC VR-144 / Wilmington).